The chain runs to 150 residues: uncharacterized protein (150 aa).

This is an uncharacterized protein from Saccharomyces cerevisiae (strain ATCC 204508 / S288c) (Baker's yeast).